A 336-amino-acid chain; its full sequence is MSRVTLSRYLIEQTRSNNTPADLRFLIEVVARACKEISHAVSKGALGGVLGSMGTENVQGEVQKKLDVISNEILLEANEWGGHLAGMASEEMDNAYQIPGKYPKGAYLLVFDPLDGSSNIDINAPVGTIFSVLRCPNEYLSQNEALNEKAFLQPGTEQVAAGYAIYGPQTMLVLTLGDGVKGFTLDREMGSFVLTHEDIKIPESTQEFAINMSNQRHWEAPVQRYVNELLAGEEGPLKKNYNMRWVAAMVADVHRILTRGGLFMYPRDSREPSKPGKLRLMYEANPMSFLVEQAGGASTDGHQRILDIQPEGLHQRVAVYLGSKEEVERATAYHKE.

Residues Glu-90, Asp-112, Leu-114, and Asp-115 each coordinate Mg(2+). Residues 115 to 118 (DGSS), Asn-211, and Lys-277 each bind substrate. Glu-283 serves as a coordination point for Mg(2+).

This sequence belongs to the FBPase class 1 family. Homotetramer. Mg(2+) serves as cofactor.

Its subcellular location is the cytoplasm. It carries out the reaction beta-D-fructose 1,6-bisphosphate + H2O = beta-D-fructose 6-phosphate + phosphate. Its pathway is carbohydrate biosynthesis; gluconeogenesis. The polypeptide is Fructose-1,6-bisphosphatase class 1 (Pseudomonas savastanoi pv. phaseolicola (strain 1448A / Race 6) (Pseudomonas syringae pv. phaseolicola (strain 1448A / Race 6))).